A 244-amino-acid polypeptide reads, in one-letter code: ATP-dependent Clp protease ATP-binding subunit CLPT4, chloroplastic (244 aa).

The transit peptide at Met-1–Arg-64 directs the protein to the chloroplast. Low complexity predominate over residues Ser-30–Ser-48. Disordered stretches follow at residues Ser-30 to Trp-55 and Gly-220 to Leu-244.

The protein belongs to the ClpA/ClpB family.

The protein localises to the plastid. Its subcellular location is the chloroplast. Its function is as follows. Accessory protein regulating the assembly of the plastid Clp protease system. The chain is ATP-dependent Clp protease ATP-binding subunit CLPT4, chloroplastic from Chlamydomonas reinhardtii (Chlamydomonas smithii).